A 393-amino-acid polypeptide reads, in one-letter code: tRNA(Met) cytidine acetate ligase (393 aa).

ATP contacts are provided by Gly81, Asn142, and Arg167.

This sequence belongs to the TmcAL family.

The protein resides in the cytoplasm. The enzyme catalyses cytidine(34) in elongator tRNA(Met) + acetate + ATP = N(4)-acetylcytidine(34) in elongator tRNA(Met) + AMP + diphosphate. In terms of biological role, catalyzes the formation of N(4)-acetylcytidine (ac(4)C) at the wobble position of elongator tRNA(Met), using acetate and ATP as substrates. First activates an acetate ion to form acetyladenylate (Ac-AMP) and then transfers the acetyl group to tRNA to form ac(4)C34. The protein is tRNA(Met) cytidine acetate ligase of Bacillus cereus (strain AH187).